Consider the following 531-residue polypeptide: GPI alpha-1,2-mannosyltransferase 3 (531 aa).

Residue asparagine 84 is glycosylated (N-linked (GlcNAc...) asparagine). A run of 3 helical transmembrane segments spans residues 99 to 119, 124 to 144, and 174 to 196; these read GLRG…LYLL, VWFL…IADV, and YCAT…LYYY. Asparagine 204 is a glycosylation site (N-linked (GlcNAc...) asparagine). A run of 6 helical transmembrane segments spans residues 210 to 230, 249 to 269, 303 to 323, 328 to 348, 350 to 370, and 375 to 395; these read LICV…WIPL, YLPI…IFFG, GVPV…MVTP, ILLV…HKEF, FIYP…SNLK, and AAVG…GLIH. Asparagine 414 and asparagine 476 each carry an N-linked (GlcNAc...) asparagine glycan.

Belongs to the glycosyltransferase 22 family. PIGB subfamily.

It is found in the endoplasmic reticulum membrane. It functions in the pathway glycolipid biosynthesis; glycosylphosphatidylinositol-anchor biosynthesis. Alpha-1,2-mannosyltransferase that catalyzes the transfer of the third mannose, via an alpha-1,2 bond, from a dolichol-phosphate-mannose (Dol-P-Man) to an alpha-D-Man-(1-&gt;6)-2-PEtn-alpha-D-Man-(1-&gt;4)-alpha-D-GlcN-(1-&gt;6)-(1-radyl,2-acyl-sn-glycero-3-phospho)-2-acyl-inositol intermediate to generate an alpha-D-Man-(1-&gt;2)-alpha-D-Man-(1-&gt;6)-2-PEtn-alpha-D-Man-(1-&gt;4)-alpha-D-GlcN-(1-&gt;6)-(1-radyl,2-acyl-sn-glycero-3-phospho)-2-acyl-inositol (also termed H6) and participates in the nineth step of the glycosylphosphatidylinositol-anchor biosynthesis. May also add the third mannose to an alpha-D-Man-(1-&gt;6)-alpha-D-Man-(1-&gt;4)-alpha-D-GlcN-(1-&gt;6)-(1-radyl,2-acyl-sn-glycero-3-phospho)-2-acyl-inositol (also termed H3) intermediate generating an alpha-D-Man-(1-&gt;2)-alpha-D-Man-(1-&gt;6)-alpha-D-Man-(1-&gt;4)-alpha-D-GlcN-(1-&gt;6)-(1-radyl,2-acyl-sn-glycero-3-phospho)-2-acyl-inositol (also termed H4). In Xenopus laevis (African clawed frog), this protein is GPI alpha-1,2-mannosyltransferase 3.